A 367-amino-acid chain; its full sequence is Alanine racemase (367 aa).

The Proton acceptor; specific for D-alanine role is filled by lysine 40. Position 40 is an N6-(pyridoxal phosphate)lysine (lysine 40). Residue arginine 136 participates in substrate binding. The active-site Proton acceptor; specific for L-alanine is the tyrosine 263. Substrate is bound at residue methionine 310.

It belongs to the alanine racemase family. It depends on pyridoxal 5'-phosphate as a cofactor.

It catalyses the reaction L-alanine = D-alanine. The protein operates within amino-acid biosynthesis; D-alanine biosynthesis; D-alanine from L-alanine: step 1/1. In terms of biological role, catalyzes the interconversion of L-alanine and D-alanine. May also act on other amino acids. This is Alanine racemase (alr) from Streptococcus pneumoniae serotype 19F (strain G54).